The following is a 103-amino-acid chain: Large ribosomal subunit protein bL21 (103 aa).

Belongs to the bacterial ribosomal protein bL21 family. In terms of assembly, part of the 50S ribosomal subunit. Contacts protein L20.

In terms of biological role, this protein binds to 23S rRNA in the presence of protein L20. The sequence is that of Large ribosomal subunit protein bL21 from Erwinia tasmaniensis (strain DSM 17950 / CFBP 7177 / CIP 109463 / NCPPB 4357 / Et1/99).